Here is a 180-residue protein sequence, read N- to C-terminus: Transcription factor HES-7.1-A (180 aa).

One can recognise a bHLH domain in the interval 13-70 (HRKLLKPLVEKRRRERINNSLEKLRIFLFQTLKSEKLKNPKVEKAEILECTVQFLQSR). Positions 84–116 (YQSGFQHCLETTLHFMNSKPDMNGVTKELLSHQ) constitute an Orange domain. The WRPW motif signature appears at 176–179 (WRPW).

In terms of assembly, transcription repression requires formation of a complex with a corepressor protein of the Groucho/TLE family. In terms of tissue distribution, expressed in the presumptive midbrain-hindbrain boundary (MHB) as early as the early gastrula stage (stage 10.5). Expression in the MHB continues through to tailbud stage. Also transiently expressed in the eye anlage at late neurula stage.

It is found in the nucleus. Its function is as follows. Transcriptional repressor. Represses transcription from both N box- and E box-containing promoters. Demarcates the prospective midbrain-hindbrain boundary (MHB) region in the neuroectoderm in early gastrulae embryos by repressing transcription of a number of target genes. This Xenopus laevis (African clawed frog) protein is Transcription factor HES-7.1-A (hes7.1-a).